We begin with the raw amino-acid sequence, 1053 residues long: DNA-directed RNA polymerase subunit beta' (1053 aa).

Residues Cys-60, Cys-62, Cys-75, and Cys-78 each coordinate Zn(2+). Mg(2+) is bound by residues Asp-449, Asp-451, and Asp-453.

It belongs to the RNA polymerase beta' chain family. As to quaternary structure, the RNAP catalytic core consists of 2 alpha, 1 beta, 1 beta' and 1 omega subunit. When a sigma factor is associated with the core the holoenzyme is formed, which can initiate transcription. Mg(2+) serves as cofactor. Requires Zn(2+) as cofactor.

The catalysed reaction is RNA(n) + a ribonucleoside 5'-triphosphate = RNA(n+1) + diphosphate. Its function is as follows. DNA-dependent RNA polymerase catalyzes the transcription of DNA into RNA using the four ribonucleoside triphosphates as substrates. This chain is DNA-directed RNA polymerase subunit beta', found in Brochothrix thermosphacta (Microbacterium thermosphactum).